The sequence spans 54 residues: Snake venom 5'-nucleotidase (54 aa).

2 residues coordinate Zn(2+): D11 and H13. N-linked (GlcNAc...) asparagine glycosylation occurs at N46.

The protein belongs to the 5'-nucleotidase family. It depends on Zn(2+) as a cofactor. Post-translationally, venom 5'-nucleotidases (or a part thereof) may be released into the venom via exosome-like vesicles. They may be attached via a GPI anchor to the membrane of these vesicles. Soluble forms of 5'-nucleotidase might be released by cleavage of the ectodomain in the exosome-like vesicles or venom gland cells. In terms of tissue distribution, expressed by the venom gland.

It is found in the membrane. The catalysed reaction is a ribonucleoside 5'-phosphate + H2O = a ribonucleoside + phosphate. Hydrolyzes nucleotides into nucleosides. Snake venom 5'-nucleotidases are widely distributed among venomous snake taxa, but there is a lack of information about their biological activities. They have been shown to inhibit platelet aggregation. This effect may be due to the liberation of inhibitory AMP or adenosine by its action on ADP released upon initiation of aggregation. Venom 5'-nucleotidases are also known to synergistically act in vivo with other toxins like ADPases, phospholipases, and disintegrins to exert a more pronounced anti-coagulant effect. The protein is Snake venom 5'-nucleotidase of Gloydius blomhoffii blomhoffii (Japanese mamushi).